Here is a 172-residue protein sequence, read N- to C-terminus: Probable chorismate pyruvate-lyase (172 aa).

Residues Met37, Arg79, Leu117, and Glu158 each coordinate substrate.

It belongs to the UbiC family.

The protein resides in the cytoplasm. It carries out the reaction chorismate = 4-hydroxybenzoate + pyruvate. It participates in cofactor biosynthesis; ubiquinone biosynthesis. In terms of biological role, removes the pyruvyl group from chorismate, with concomitant aromatization of the ring, to provide 4-hydroxybenzoate (4HB) for the ubiquinone pathway. The sequence is that of Probable chorismate pyruvate-lyase from Bartonella quintana (strain Toulouse) (Rochalimaea quintana).